A 90-amino-acid chain; its full sequence is Acyl-CoA-binding protein (90 aa).

Positions 1 to 16 (MGLKEDFEEHAEKAKT) are enriched in basic and acidic residues. The interval 1-20 (MGLKEDFEEHAEKAKTLPEN) is disordered. Positions 3–88 (LKEDFEEHAE…VKQLLGEAAA (86 aa)) constitute an ACB domain. An acyl-CoA-binding positions include 30-34 (YGLYK), lysine 56, and tyrosine 75.

It belongs to the ACBP family.

Functionally, binds medium- and long-chain acyl-CoA esters with very high affinity and may function as an intracellular carrier of acyl-CoA esters. In Ricinus communis (Castor bean), this protein is Acyl-CoA-binding protein.